The following is a 389-amino-acid chain: Tubulin-like protein CetZ3 (389 aa).

GTP contacts are provided by residues 10–14 (QAGGK), 110–112 (GTG), E142, N169, and N187.

The protein belongs to the CetZ family.

The protein resides in the cytoplasm. Involved in cell shape control. This Haloferax volcanii (strain ATCC 29605 / DSM 3757 / JCM 8879 / NBRC 14742 / NCIMB 2012 / VKM B-1768 / DS2) (Halobacterium volcanii) protein is Tubulin-like protein CetZ3.